The sequence spans 957 residues: Isoleucine--tRNA ligase (957 aa).

The 'HIGH' region signature appears at 57-67 (PYANGDIHIGH). Glu-594 provides a ligand contact to L-isoleucyl-5'-AMP. The short motif at 635–639 (KMSKS) is the 'KMSKS' region element. An ATP-binding site is contributed by Lys-638. Zn(2+) contacts are provided by Cys-920, Cys-923, Cys-940, and Cys-943.

This sequence belongs to the class-I aminoacyl-tRNA synthetase family. IleS type 1 subfamily. In terms of assembly, monomer. Requires Zn(2+) as cofactor.

The protein resides in the cytoplasm. It catalyses the reaction tRNA(Ile) + L-isoleucine + ATP = L-isoleucyl-tRNA(Ile) + AMP + diphosphate. In terms of biological role, catalyzes the attachment of isoleucine to tRNA(Ile). As IleRS can inadvertently accommodate and process structurally similar amino acids such as valine, to avoid such errors it has two additional distinct tRNA(Ile)-dependent editing activities. One activity is designated as 'pretransfer' editing and involves the hydrolysis of activated Val-AMP. The other activity is designated 'posttransfer' editing and involves deacylation of mischarged Val-tRNA(Ile). The chain is Isoleucine--tRNA ligase from Laribacter hongkongensis (strain HLHK9).